We begin with the raw amino-acid sequence, 180 residues long: Ribosome-recycling factor (180 aa).

The protein belongs to the RRF family.

The protein resides in the cytoplasm. Its function is as follows. Responsible for the release of ribosomes from messenger RNA at the termination of protein biosynthesis. May increase the efficiency of translation by recycling ribosomes from one round of translation to another. This chain is Ribosome-recycling factor, found in Chlamydia abortus (strain DSM 27085 / S26/3) (Chlamydophila abortus).